Consider the following 245-residue polypeptide: Membrane-associated progesterone-binding protein 4 (245 aa).

A helical transmembrane segment spans residues 6–26 (RFLLSPFVGVTFIVVLVSLYF). In terms of domain architecture, Cytochrome b5 heme-binding spans 39–138 (KRLFSAEELA…RTYTPVGKLV (100 aa)). The steroid-binding stretch occupies residues 45–138 (EELALYNGTD…RTYTPVGKLV (94 aa)).

It belongs to the cytochrome b5 family. MAPR subfamily.

The protein localises to the membrane. This chain is Membrane-associated progesterone-binding protein 4, found in Arabidopsis thaliana (Mouse-ear cress).